The sequence spans 338 residues: Glyceraldehyde-3-phosphate dehydrogenase 2 (338 aa).

NAD(+)-binding positions include 11–12, D33, and R78; that span reads RI. D-glyceraldehyde 3-phosphate contacts are provided by residues 149–151, T180, 209–210, and R232; these read SCT and TG. Residue C150 is the Nucleophile of the active site. NAD(+) is bound at residue N314.

Belongs to the glyceraldehyde-3-phosphate dehydrogenase family. In terms of assembly, homotetramer.

The protein resides in the cytoplasm. The enzyme catalyses D-glyceraldehyde 3-phosphate + phosphate + NAD(+) = (2R)-3-phospho-glyceroyl phosphate + NADH + H(+). It participates in carbohydrate degradation; glycolysis; pyruvate from D-glyceraldehyde 3-phosphate: step 1/5. The polypeptide is Glyceraldehyde-3-phosphate dehydrogenase 2 (gpd2) (Agaricus bisporus (White button mushroom)).